The chain runs to 365 residues: UDP-N-acetylglucosamine--N-acetylmuramyl-(pentapeptide) pyrophosphoryl-undecaprenol N-acetylglucosamine transferase (365 aa).

Residues 17-19 (TGG), asparagine 129, arginine 167, serine 194, isoleucine 250, 269-274 (ALTVSE), and glutamine 295 contribute to the UDP-N-acetyl-alpha-D-glucosamine site.

The protein belongs to the glycosyltransferase 28 family. MurG subfamily.

It is found in the cell inner membrane. It catalyses the reaction di-trans,octa-cis-undecaprenyl diphospho-N-acetyl-alpha-D-muramoyl-L-alanyl-D-glutamyl-meso-2,6-diaminopimeloyl-D-alanyl-D-alanine + UDP-N-acetyl-alpha-D-glucosamine = di-trans,octa-cis-undecaprenyl diphospho-[N-acetyl-alpha-D-glucosaminyl-(1-&gt;4)]-N-acetyl-alpha-D-muramoyl-L-alanyl-D-glutamyl-meso-2,6-diaminopimeloyl-D-alanyl-D-alanine + UDP + H(+). It participates in cell wall biogenesis; peptidoglycan biosynthesis. Its function is as follows. Cell wall formation. Catalyzes the transfer of a GlcNAc subunit on undecaprenyl-pyrophosphoryl-MurNAc-pentapeptide (lipid intermediate I) to form undecaprenyl-pyrophosphoryl-MurNAc-(pentapeptide)GlcNAc (lipid intermediate II). The polypeptide is UDP-N-acetylglucosamine--N-acetylmuramyl-(pentapeptide) pyrophosphoryl-undecaprenol N-acetylglucosamine transferase (Shewanella violacea (strain JCM 10179 / CIP 106290 / LMG 19151 / DSS12)).